The primary structure comprises 250 residues: Cyclopentanol dehydrogenase (250 aa).

NAD(+) contacts are provided by methionine 18, aspartate 37, aspartate 63, valine 64, asparagine 90, tyrosine 155, lysine 159, isoleucine 188, threonine 190, and threonine 193. Tyrosine 155 (proton acceptor) is an active-site residue.

The protein belongs to the short-chain dehydrogenases/reductases (SDR) family.

The enzyme catalyses cyclopentanol + NAD(+) = cyclopentanone + NADH + H(+). It catalyses the reaction cyclohexanol + NAD(+) = cyclohexanone + NADH + H(+). It functions in the pathway alcohol metabolism; cyclopentanol degradation; 5-valerolactone from cyclopentanol: step 1/2. Catalyzes the oxidation of cyclopentanol to cyclopentanone and cyclohexanol to cyclohexanone. The activity toward cyclohexanol is 60% that of cyclopentanol. In Comamonas sp. (strain NCIMB 9872), this protein is Cyclopentanol dehydrogenase.